The primary structure comprises 324 residues: Transmembrane protein 171 (324 aa).

The next 4 membrane-spanning stretches (helical) occupy residues 22 to 42 (IFCFFVFGAVLLCVGVLLSIF), 57 to 77 (MVLKVAGPACAVVGLGAVILA), 113 to 133 (LIFGFLFLTSGMLISVLGIWV), and 160 to 180 (FLSLQIMGPLIVLVGLCFFVV). Residues 229-239 (PESSASAVAES) are compositionally biased toward low complexity. Disordered stretches follow at residues 229–248 (PESSASAVAESPGTNSLLPN) and 279–304 (YTISGTNSSSEASHTPHLPSELPPRY). Polar residues predominate over residues 279–291 (YTISGTNSSSEAS).

It is found in the membrane. This Homo sapiens (Human) protein is Transmembrane protein 171 (TMEM171).